A 145-amino-acid polypeptide reads, in one-letter code: Methylglyoxal synthase (145 aa).

The MGS-like domain maps to 1–145 (MNSKKKIALV…YYQKIRKDNF (145 aa)). Substrate contacts are provided by residues His12, Lys16, 38–41 (TGTT), and 58–59 (SG). The active-site Proton donor/acceptor is the Asp64. His91 contributes to the substrate binding site.

The protein belongs to the methylglyoxal synthase family.

It carries out the reaction dihydroxyacetone phosphate = methylglyoxal + phosphate. Catalyzes the formation of methylglyoxal from dihydroxyacetone phosphate. The sequence is that of Methylglyoxal synthase from Clostridium acetobutylicum (strain ATCC 824 / DSM 792 / JCM 1419 / IAM 19013 / LMG 5710 / NBRC 13948 / NRRL B-527 / VKM B-1787 / 2291 / W).